The following is a 194-amino-acid chain: MRACVLVHVLTMVGFALGKAPVASVRTCHLCFLEDPSIGCISGSEKCTISSSSPCMVITIYQNVKVRFHVRGCGQHHSFRCQENHVIYYSDYWYRVNCCQYDYCNSWSSAQHQSTLPGPPGNHLGVPLSESQIKQFYQALHLPLFQPDLHTHKVSEGPDSLILPPGLGLSIADLRKIYLFLNSSGLLVLPQARP.

Positions 1 to 18 (MRACVLVHVLTMVGFALG) are cleaved as a signal peptide. Residues 26–118 (RTCHLCFLED…SAQHQSTLPG (93 aa)) enclose the UPAR/Ly6 domain. 5 disulfide bridges follow: Cys28–Cys55, Cys31–Cys40, Cys47–Cys73, Cys81–Cys98, and Cys99–Cys104. A glycan (N-linked (GlcNAc...) asparagine) is linked at Asn182.

Post-translationally, N-glycosylated.

The protein resides in the secreted. This Rattus norvegicus (Rat) protein is Lymphocyte antigen 6 complex locus protein G5b (Ly6g5b).